The following is a 553-amino-acid chain: Glutamate--tRNA ligase (553 aa).

A 'HIGH' region motif is present at residues 103–113; sequence PNPSGPLHIGH.

It belongs to the class-I aminoacyl-tRNA synthetase family. Glutamate--tRNA ligase type 2 subfamily.

The protein resides in the cytoplasm. The enzyme catalyses tRNA(Glu) + L-glutamate + ATP = L-glutamyl-tRNA(Glu) + AMP + diphosphate. Its function is as follows. Catalyzes the attachment of glutamate to tRNA(Glu) in a two-step reaction: glutamate is first activated by ATP to form Glu-AMP and then transferred to the acceptor end of tRNA(Glu). This chain is Glutamate--tRNA ligase, found in Methanothermobacter thermautotrophicus (strain ATCC 29096 / DSM 1053 / JCM 10044 / NBRC 100330 / Delta H) (Methanobacterium thermoautotrophicum).